An 84-amino-acid chain; its full sequence is uncharacterized protein (84 aa).

Low complexity predominate over residues 1–14 (MQKLNKSSSKGKNN). The tract at residues 1 to 84 (MQKLNKSSSK…VDKGERKESE (84 aa)) is disordered. Gly residues predominate over residues 28–40 (STYGFGPYGGGGF). Basic and acidic residues-rich tracts occupy residues 53 to 65 (DTKKLKGEVEEGT) and 73 to 84 (KLVDKGERKESE).

This is an uncharacterized protein from Schizosaccharomyces pombe (strain 972 / ATCC 24843) (Fission yeast).